We begin with the raw amino-acid sequence, 133 residues long: MSTIRVNVVTPDGKVYDGDVDMVVVRTVEGELGILPKHIPLVAPLTVGAVRLKKGNSEEQVAVSGGFVEVRPDQVTILAEAAELPSAIDVDRARAAKERAESRLNSTKQDAVDFKRAELALKRAINRLDVTGK.

This sequence belongs to the ATPase epsilon chain family. As to quaternary structure, F-type ATPases have 2 components, CF(1) - the catalytic core - and CF(0) - the membrane proton channel. CF(1) has five subunits: alpha(3), beta(3), gamma(1), delta(1), epsilon(1). CF(0) has three main subunits: a, b and c.

It is found in the cell membrane. Functionally, produces ATP from ADP in the presence of a proton gradient across the membrane. This Alkalihalophilus pseudofirmus (strain ATCC BAA-2126 / JCM 17055 / OF4) (Bacillus pseudofirmus) protein is ATP synthase epsilon chain (atpC).